A 516-amino-acid polypeptide reads, in one-letter code: Serine carboxypeptidase-like 49 (516 aa).

A signal peptide spans 1-22; sequence MEKLTFLSLLLHFVVFIASTIP. The propeptide occupies 23–82; that stretch reads SSSFLLNDRTFERSNLPSTRAEKLIRELNLFPQQDLNVIDVADLPLTAAEGPGIVERKFV. 3 cysteine pairs are disulfide-bonded: Cys-139–Cys-379, Cys-307–Cys-322, and Cys-345–Cys-350. Residue Asn-157 is glycosylated (N-linked (GlcNAc...) asparagine). Ser-229 is a catalytic residue. Residue Asp-417 is part of the active site. A substrate-binding site is contributed by Cys-420. His-474 is an active-site residue.

This sequence belongs to the peptidase S10 family. In terms of tissue distribution, expressed in roots, senescent leaves and flowers.

The protein resides in the secreted. Functionally, probable carboxypeptidase. The polypeptide is Serine carboxypeptidase-like 49 (SCPL49) (Arabidopsis thaliana (Mouse-ear cress)).